A 269-amino-acid polypeptide reads, in one-letter code: tRNA pseudouridine synthase A (269 aa).

The active-site Nucleophile is the Asp55. Substrate is bound at residue Tyr111.

It belongs to the tRNA pseudouridine synthase TruA family.

It carries out the reaction uridine(38/39/40) in tRNA = pseudouridine(38/39/40) in tRNA. Formation of pseudouridine at positions 38, 39 and 40 in the anticodon stem and loop of transfer RNAs. The sequence is that of tRNA pseudouridine synthase A from Methanosarcina mazei (strain ATCC BAA-159 / DSM 3647 / Goe1 / Go1 / JCM 11833 / OCM 88) (Methanosarcina frisia).